The chain runs to 274 residues: Ribonucleoside-diphosphate reductase small chain (274 aa).

Fe cation-binding residues include aspartate 70, glutamate 101, and histidine 104. Tyrosine 108 is an active-site residue. Fe cation contacts are provided by glutamate 163, glutamate 197, and histidine 200.

This sequence belongs to the ribonucleoside diphosphate reductase small chain family. As to quaternary structure, heterodimer of a large and a small chain. Fe cation serves as cofactor.

The enzyme catalyses a 2'-deoxyribonucleoside 5'-diphosphate + [thioredoxin]-disulfide + H2O = a ribonucleoside 5'-diphosphate + [thioredoxin]-dithiol. In terms of biological role, ribonucleoside-diphosphate reductase holoenzyme provides the precursors necessary for viral DNA synthesis. Allows virus growth in non-dividing cells. Catalyzes the biosynthesis of deoxyribonucleotides from the corresponding ribonucleotides. This Sus scrofa (Pig) protein is Ribonucleoside-diphosphate reductase small chain.